The primary structure comprises 145 residues: 3-dehydroquinate dehydratase (145 aa).

The active-site Proton acceptor is Tyr24. 3 residues coordinate substrate: Asn76, His82, and Asp89. Residue His102 is the Proton donor of the active site. Residues 103-104 and Arg113 each bind substrate; that span reads VS.

It belongs to the type-II 3-dehydroquinase family. In terms of assembly, homododecamer.

It catalyses the reaction 3-dehydroquinate = 3-dehydroshikimate + H2O. It participates in metabolic intermediate biosynthesis; chorismate biosynthesis; chorismate from D-erythrose 4-phosphate and phosphoenolpyruvate: step 3/7. Catalyzes a trans-dehydration via an enolate intermediate. The polypeptide is 3-dehydroquinate dehydratase (Herminiimonas arsenicoxydans).